The following is a 249-amino-acid chain: ATP synthase subunit a, chloroplastic (249 aa).

Transmembrane regions (helical) follow at residues 40-60 (QVLI…VLAV), 97-117 (VPFI…GALL), 136-156 (INTT…AGLS), 201-221 (LVVV…VMFL), and 222-242 (GLFT…AYIG).

Belongs to the ATPase A chain family. F-type ATPases have 2 components, CF(1) - the catalytic core - and CF(0) - the membrane proton channel. CF(1) has five subunits: alpha(3), beta(3), gamma(1), delta(1), epsilon(1). CF(0) has four main subunits: a, b, b' and c.

The protein localises to the plastid. The protein resides in the chloroplast thylakoid membrane. Functionally, key component of the proton channel; it plays a direct role in the translocation of protons across the membrane. This chain is ATP synthase subunit a, chloroplastic, found in Arabis hirsuta (Hairy rock-cress).